An 856-amino-acid polypeptide reads, in one-letter code: Dual specificity protein kinase TTK (856 aa).

The residue at position 1 (methionine 1) is an N-acetylmethionine. Serine 7 is modified (phosphoserine). Residue threonine 33 is modified to Phosphothreonine. Phosphoserine is present on residues serine 37, serine 80, serine 281, serine 317, and serine 321. Residue threonine 360 is modified to Phosphothreonine. Serine 363 is subject to Phosphoserine. Residues 369 to 392 (EETKEYQEPEVPESNQKQWQSKRK) form a disordered region. Phosphoserine occurs at positions 393, 435, and 454. Residues 524 to 790 (YSILKQIGSG…IPELLAHPYV (267 aa)) form the Protein kinase domain. Residues 530–538 (IGSGGSSKV) and lysine 552 contribute to the ATP site. Aspartate 646 acts as the Proton acceptor in catalysis. At serine 820 the chain carries Phosphoserine. Residues 835-846 (YSGGESHNSSSS) show a composition bias toward low complexity. The tract at residues 835 to 856 (YSGGESHNSSSSKTFGKKREKK) is disordered.

This sequence belongs to the protein kinase superfamily. Ser/Thr protein kinase family. Interacts with TPR; the interactions occurs in a microtubule-independent manner. Interacts with MAD1L1 and MAD2L1.

The enzyme catalyses L-seryl-[protein] + ATP = O-phospho-L-seryl-[protein] + ADP + H(+). It catalyses the reaction L-threonyl-[protein] + ATP = O-phospho-L-threonyl-[protein] + ADP + H(+). The catalysed reaction is L-tyrosyl-[protein] + ATP = O-phospho-L-tyrosyl-[protein] + ADP + H(+). Inhibited by the ATP-competitive kinase inhibitor, SP600125. In terms of biological role, involved in mitotic spindle assembly checkpoint signaling, a process that delays anaphase until chromosomes are bioriented on the spindle, and in the repair of incorrect mitotic kinetochore-spindle microtubule attachments. Phosphorylates MAD1L1 to promote the mitotic spindle assembly checkpoint. Phosphorylates CDCA8/Borealin leading to enhanced AURKB activity at the kinetochore. Phosphorylates SKA3 at 'Ser-34' leading to dissociation of the SKA complex from microtubules and destabilization of microtubule-kinetochore attachments. Phosphorylates KNL1, KNTC1 and autophosphorylates. Phosphorylates MCRS1 which enhances recruitment of KIF2A to the minus end of spindle microtubules and promotes chromosome alignment. The sequence is that of Dual specificity protein kinase TTK (TTK) from Macaca fascicularis (Crab-eating macaque).